The following is a 474-amino-acid chain: Gamma-aminobutyric acid receptor subunit beta-2 (474 aa).

A signal peptide spans 1–25 (MWRVRKRGYFGIWSFPLIIAAVCAQ). Topologically, residues 26-244 (SVNDPSNMSL…SFKLKRNIGY (219 aa)) are extracellular. 2 N-linked (GlcNAc...) asparagine glycosylation sites follow: N32 and N104. Y121 serves as a coordination point for histamine. The cysteines at positions 160 and 174 are disulfide-linked. A glycan (N-linked (GlcNAc...) asparagine) is linked at N173. Histamine contacts are provided by residues 180–181 (SY) and T226. Y181 and T226 together coordinate 4-aminobutanoate. 3 consecutive transmembrane segments (helical) span residues 245-266 (FILQ…SFWI), 270-292 (ASAA…NTHL), and 304-326 (AIDM…YALV). The Cytoplasmic segment spans residues 327 to 451 (NYIFFGRGPQ…DLTDVNAIDR (125 aa)). Residue Y403 is modified to Phosphotyrosine. A helical membrane pass occupies residues 452–473 (WSRIFFPVVFSFFNIVYWLYYV).

The protein belongs to the ligand-gated ion channel (TC 1.A.9) family. Gamma-aminobutyric acid receptor (TC 1.A.9.5) subfamily. GABRB2 sub-subfamily. As to quaternary structure, heteropentamer, formed by a combination of alpha (GABRA1-6), beta (GABRB1-3), gamma (GABRG1-3), delta (GABRD), epsilon (GABRE), rho (GABRR1-3), pi (GABRP) and theta (GABRQ) chains, each subunit exhibiting distinct physiological and pharmacological properties. Interacts with UBQLN1. May interact with KIF21B. Identified in a complex of 720 kDa composed of LHFPL4, NLGN2, GABRA1, GABRB2, GABRG2 and GABRB3. Post-translationally, glycosylated. As to expression, expressed in brain (at protein level), in cerebellar granule cells. Expressed in lungs, in alveolar epithelium.

Its subcellular location is the postsynaptic cell membrane. The protein resides in the cell membrane. It localises to the cytoplasmic vesicle membrane. It carries out the reaction chloride(in) = chloride(out). Allosterically activated by benzodiazepines and the anesthetic etomidate. Inhibited by the antagonist bicuculline. Potentiated by histamine. In terms of biological role, beta subunit of the heteropentameric ligand-gated chloride channel gated by gamma-aminobutyric acid (GABA), a major inhibitory neurotransmitter in the brain. GABA-gated chloride channels, also named GABA(A) receptors (GABAAR), consist of five subunits arranged around a central pore and contain GABA active binding site(s) located at the alpha and beta subunit interface(s). When activated by GABA, GABAARs selectively allow the flow of chloride anions across the cell membrane down their electrochemical gradient. Chloride influx into the postsynaptic neuron following GABAAR opening decreases the neuron ability to generate a new action potential, thereby reducing nerve transmission. GABAARs containing alpha-1 and beta-2 or -3 subunits exhibit synaptogenic activity; the gamma-2 subunit being necessary but not sufficient to induce rapid synaptic contacts formation. Extrasynaptic beta-2 receptors contribute to the tonic GABAergic inhibition. Beta-containing GABAARs can simultaneously bind GABA and histamine where histamine binds at the interface of two neighboring beta subunits, which may be involved in the regulation of sleep and wakefulness. In Rattus norvegicus (Rat), this protein is Gamma-aminobutyric acid receptor subunit beta-2.